A 110-amino-acid chain; its full sequence is Large ribosomal subunit protein uL22 (110 aa).

It belongs to the universal ribosomal protein uL22 family. In terms of assembly, part of the 50S ribosomal subunit.

Functionally, this protein binds specifically to 23S rRNA; its binding is stimulated by other ribosomal proteins, e.g. L4, L17, and L20. It is important during the early stages of 50S assembly. It makes multiple contacts with different domains of the 23S rRNA in the assembled 50S subunit and ribosome. The globular domain of the protein is located near the polypeptide exit tunnel on the outside of the subunit, while an extended beta-hairpin is found that lines the wall of the exit tunnel in the center of the 70S ribosome. The sequence is that of Large ribosomal subunit protein uL22 from Campylobacter fetus subsp. fetus (strain 82-40).